Here is a 154-residue protein sequence, read N- to C-terminus: 3-hydroxyacyl-[acyl-carrier-protein] dehydratase FabZ (154 aa).

H55 is an active-site residue.

It belongs to the thioester dehydratase family. FabZ subfamily.

The protein localises to the cytoplasm. The catalysed reaction is a (3R)-hydroxyacyl-[ACP] = a (2E)-enoyl-[ACP] + H2O. In terms of biological role, involved in unsaturated fatty acids biosynthesis. Catalyzes the dehydration of short chain beta-hydroxyacyl-ACPs and long chain saturated and unsaturated beta-hydroxyacyl-ACPs. This Oleidesulfovibrio alaskensis (strain ATCC BAA-1058 / DSM 17464 / G20) (Desulfovibrio alaskensis) protein is 3-hydroxyacyl-[acyl-carrier-protein] dehydratase FabZ.